Here is a 494-residue protein sequence, read N- to C-terminus: Beta-glucosidase 29 (494 aa).

An N-terminal signal peptide occupies residues 1-28 (MAWLGIGMGRQIVPVLVFVAVLCSGVDA). A beta-D-glucoside is bound at residue Q49. N-linked (GlcNAc...) asparagine glycosylation occurs at N103. Residues H138 and 183–184 (NE) each bind a beta-D-glucoside. E184 functions as the Proton donor in the catalytic mechanism. A disulfide bridge connects residues C203 and C211. N263 carries N-linked (GlcNAc...) asparagine glycosylation. Y327 provides a ligand contact to a beta-D-glucoside. The N-linked (GlcNAc...) asparagine glycan is linked to N352. Residue E398 coordinates a beta-D-glucoside. Catalysis depends on E398, which acts as the Nucleophile. N406 carries N-linked (GlcNAc...) asparagine glycosylation. Residues W447, 454–455 (EW), and F463 contribute to the a beta-D-glucoside site.

It belongs to the glycosyl hydrolase 1 family.

It carries out the reaction Hydrolysis of terminal, non-reducing beta-D-glucosyl residues with release of beta-D-glucose.. This chain is Beta-glucosidase 29 (BGLU29), found in Oryza sativa subsp. japonica (Rice).